The following is a 433-amino-acid chain: KH domain-containing, RNA-binding, signal transduction-associated protein 1 (433 aa).

Residues Met-1–Met-79 are disordered. The segment covering Gly-41–Ala-76 has biased composition (low complexity). The tract at residues Glu-82 to Met-243 is involved in homodimerization. One can recognise a KH domain in the interval Gln-171–Lys-197. 3 disordered regions span residues Gly-259 to Arg-305, Ala-317 to Pro-351, and Gln-403 to Tyr-433. A compositionally biased stretch (pro residues) spans Ala-277 to Arg-300. Low complexity predominate over residues Val-329–Ile-342. Over residues Ala-424 to Tyr-433 the composition is skewed to basic and acidic residues.

It belongs to the KHDRBS family. As to quaternary structure, self-associates to form homooligomers when bound to RNA, oligomerization appears to be limited when binding to proteins. Post-translationally, tyrosine phosphorylated by several non-receptor tyrosine kinases including LCK, FYN and JAK3. In terms of processing, acetylated. Positively correlates with ability to bind RNA. Methylated by HRMT1L2. Required for nuclear localization.

The protein resides in the nucleus. It localises to the cytoplasm. The protein localises to the membrane. Its function is as follows. Recruited and tyrosine phosphorylated by several receptor systems, for example the T-cell, leptin and insulin receptors. Once phosphorylated, functions as an adapter protein in signal transduction cascades by binding to SH2 and SH3 domain-containing proteins. Role in G2-M progression in the cell cycle. Represses CBP-dependent transcriptional activation apparently by competing with other nuclear factors for binding to CBP. Also acts as a putative regulator of mRNA stability and/or translation rates and mediates mRNA nuclear export. Plays a role in the regulation of alternative splicing and influences mRNA splice site selection and exon inclusion. This chain is KH domain-containing, RNA-binding, signal transduction-associated protein 1, found in Gallus gallus (Chicken).